Consider the following 534-residue polypeptide: Sodium-dependent lysophosphatidylcholine symporter 1 (534 aa).

The Cytoplasmic portion of the chain corresponds to 1-39; it reads MAKGEGAESGSAAGLLPTSILQASERPVQVKKEPKKKQQ. The helical transmembrane segment at 40–69 threads the bilayer; that stretch reads LSICNKLCYAVGGAPYQLTGCALGFFLQIY. Over 70–80 the chain is Extracellular; that stretch reads LLDVAKVEPLP. The helical transmembrane segment at 81–101 threads the bilayer; sequence ASIILFVGRAWDAFTDPLVGF. Over 102–113 the chain is Cytoplasmic; the sequence is CISKSSWTRLGR. Residues 114–133 form a helical membrane-spanning segment; that stretch reads LMPWIIFSTPLAIIAYFLIW. Topologically, residues 134–148 are extracellular; sequence FVPDFPSGTESSHGF. The chain crosses the membrane as a helical span at residues 149 to 173; it reads LWYLLFYCLFETLVTCFHVPYSALT. Residues 174-180 are Cytoplasmic-facing; that stretch reads MFISTEQ. Residues 181–212 traverse the membrane as a helical segment; sequence SERDSATAYRMTVEVLGTVIGTAIQGQIVGQA. Over 213–232 the chain is Extracellular; that stretch reads KAPCLQDQNGSVVVSEVANR. Cysteines 216 and 464 form a disulfide. N-linked (GlcNAc...) asparagine glycans are attached at residues N221 and N231. The chain crosses the membrane as a helical span at residues 233–266; it reads TQSTASLKDTQNAYLLAAGIIASIYVLCAFILIL. Topologically, residues 267 to 297 are cytoplasmic; it reads GVREQRELYESQQAESMPFFQGLRLVMGHGP. The helical transmembrane segment at 298–324 threads the bilayer; it reads YVKLIAGFLFTSLAFMLVEGNFALFCT. Topologically, residues 325–335 are extracellular; it reads YTLDFRNEFQN. The helical transmembrane segment at 336-354 threads the bilayer; it reads LLLAIMLSATFTIPIWQWF. The Cytoplasmic portion of the chain corresponds to 355 to 358; that stretch reads LTRF. A helical transmembrane segment spans residues 359-380; that stretch reads GKKTAVYIGISSAVPFLILVAL. The Extracellular portion of the chain corresponds to 381 to 383; the sequence is MER. The chain crosses the membrane as a helical span at residues 384–420; sequence NLIVTYVVAVAAGVSVAAAFLLPWSMLPDVIDDFHLK. Over 421–430 the chain is Cytoplasmic; it reads HPHSPGTEPI. A helical transmembrane segment spans residues 431 to 457; the sequence is FFSFYVFFTKFASGVSLGVSTLSLDFA. Residues 458-469 lie on the Extracellular side of the membrane; sequence NYQRQGCSQPEQ. A helical membrane pass occupies residues 470–493; sequence VKFTLKMLVTMAPIILILLGLLLF. Residues 494–534 are Cytoplasmic-facing; sequence KLYPIDEEKRRQNKKALQALREEASSSGCSDTDSTELASIL.

This sequence belongs to the major facilitator superfamily. In terms of processing, N-glycosylated. Widely expressed. Exhibits an oscillatory pattern of expression in brown adipose tissue and liver consistent with a circadian rhythm. Enriched in brain micro-vessels, where it is specifically present in endothelium constituting the blood-brain barrier (at protein level).

The protein resides in the cell membrane. It is found in the endoplasmic reticulum membrane. It catalyses the reaction a 1-acyl-sn-glycero-3-phosphocholine(in) + Na(+)(in) = a 1-acyl-sn-glycero-3-phosphocholine(out) + Na(+)(out). It carries out the reaction 1-(4Z,7Z,10Z,13Z,16Z,19Z-docosahexaenoyl)-sn-glycero-3-phosphocholine(in) + Na(+)(in) = 1-(4Z,7Z,10Z,13Z,16Z,19Z-docosahexaenoyl)-sn-glycero-3-phosphocholine(out) + Na(+)(out). The enzyme catalyses 1-(9Z-octadecenoyl)-sn-glycero-3-phosphocholine(in) + Na(+)(in) = 1-(9Z-octadecenoyl)-sn-glycero-3-phosphocholine(out) + Na(+)(out). The catalysed reaction is 1-hexadecanoyl-sn-glycero-3-phosphocholine(in) + Na(+)(in) = 1-hexadecanoyl-sn-glycero-3-phosphocholine(out) + Na(+)(out). It catalyses the reaction a 1-acyl-sn-glycero-3-phosphoethanolamine(in) + Na(+)(in) = a 1-acyl-sn-glycero-3-phosphoethanolamine(out) + Na(+)(out). In terms of biological role, sodium-dependent lysophosphatidylcholine (LPC) symporter, which plays an essential role for blood-brain barrier formation and function. Specifically expressed in endothelium of the blood-brain barrier of micro-vessels and transports LPC into the brain. Transport of LPC is essential because it constitutes the major mechanism by which docosahexaenoic acid (DHA), an omega-3 fatty acid that is essential for normal brain growth and cognitive function, enters the brain. Transports LPC carrying long-chain fatty acids such LPC oleate and LPC palmitate with a minimum acyl chain length of 14 carbons. Does not transport docosahexaenoic acid in unesterified fatty acid. Not required for central nervous system vascular morphogenesis. The polypeptide is Sodium-dependent lysophosphatidylcholine symporter 1 (Mus musculus (Mouse)).